The primary structure comprises 502 residues: Probable glycine dehydrogenase (decarboxylating) subunit 2 (502 aa).

Lysine 273 carries the N6-(pyridoxal phosphate)lysine modification.

The protein belongs to the GcvP family. C-terminal subunit subfamily. In terms of assembly, the glycine cleavage system is composed of four proteins: P, T, L and H. In this organism, the P 'protein' is a heterodimer of two subunits. The cofactor is pyridoxal 5'-phosphate.

It catalyses the reaction N(6)-[(R)-lipoyl]-L-lysyl-[glycine-cleavage complex H protein] + glycine + H(+) = N(6)-[(R)-S(8)-aminomethyldihydrolipoyl]-L-lysyl-[glycine-cleavage complex H protein] + CO2. In terms of biological role, the glycine cleavage system catalyzes the degradation of glycine. The P protein binds the alpha-amino group of glycine through its pyridoxal phosphate cofactor; CO(2) is released and the remaining methylamine moiety is then transferred to the lipoamide cofactor of the H protein. The protein is Probable glycine dehydrogenase (decarboxylating) subunit 2 of Pyrococcus furiosus (strain ATCC 43587 / DSM 3638 / JCM 8422 / Vc1).